The sequence spans 211 residues: Beta-crystallin B3 (211 aa).

Met1 bears the N-acetylmethionine mark. An N-acetylalanine; in Beta-crystallin B3, N-terminally processed modification is found at Ala2. The tract at residues 2–23 (AEQHGAPEQAAAGKSHGGLGGS) is N-terminal arm. 2 Beta/gamma crystallin 'Greek key' domains span residues 24–63 (YKVT…QVES) and 64–108 (GPWL…RPLH). The segment at 109 to 113 (IDGPD) is connecting peptide. Beta/gamma crystallin 'Greek key' domains are found at residues 114 to 155 (HKLH…RVIN) and 156 to 198 (GTWV…RRIR). The interval 200–211 (QKWHKRGCFLSS) is C-terminal arm.

Belongs to the beta/gamma-crystallin family. As to quaternary structure, homo/heterodimer, or complexes of higher-order. The structure of beta-crystallin oligomers seems to be stabilized through interactions between the N-terminal arms.

Functionally, crystallins are the dominant structural components of the vertebrate eye lens. The polypeptide is Beta-crystallin B3 (Crybb3) (Mus musculus (Mouse)).